A 187-amino-acid polypeptide reads, in one-letter code: Elongation factor P (187 aa).

This sequence belongs to the elongation factor P family.

It is found in the cytoplasm. It functions in the pathway protein biosynthesis; polypeptide chain elongation. In terms of biological role, involved in peptide bond synthesis. Stimulates efficient translation and peptide-bond synthesis on native or reconstituted 70S ribosomes in vitro. Probably functions indirectly by altering the affinity of the ribosome for aminoacyl-tRNA, thus increasing their reactivity as acceptors for peptidyl transferase. This chain is Elongation factor P, found in Paenarthrobacter aurescens (strain TC1).